The chain runs to 240 residues: Probable transcriptional regulatory protein MS53_0373 (240 aa).

It belongs to the TACO1 family.

It localises to the cytoplasm. This Mycoplasmopsis synoviae (strain 53) (Mycoplasma synoviae) protein is Probable transcriptional regulatory protein MS53_0373.